Here is a 319-residue protein sequence, read N- to C-terminus: Acetyl esterase (319 aa).

The short motif at 91–93 is the Involved in the stabilization of the negatively charged intermediate by the formation of the oxyanion hole element; that stretch reads HGG. Residues serine 165, aspartate 262, and histidine 292 contribute to the active site.

Belongs to the 'GDXG' lipolytic enzyme family. As to quaternary structure, homodimer. Interacts with MalT and MelA.

It is found in the cytoplasm. Displays esterase activity towards short chain fatty esters (acyl chain length of up to 8 carbons). Able to hydrolyze triacetylglycerol (triacetin) and tributyrylglycerol (tributyrin), but not trioleylglycerol (triolein) or cholesterol oleate. Negatively regulates MalT activity by antagonizing maltotriose binding. Inhibits MelA galactosidase activity. This Shigella flexneri protein is Acetyl esterase.